Here is a 311-residue protein sequence, read N- to C-terminus: Thymidylate synthase (311 aa).

DUMP is bound by residues arginine 28 and 172–173 (RR). Cysteine 192 serves as the catalytic Nucleophile. Residues 213–216 (RSCD), asparagine 224, and 254–256 (HLY) contribute to the dUMP site. A (6R)-5,10-methylene-5,6,7,8-tetrahydrofolate-binding site is contributed by aspartate 216. Alanine 310 is a (6R)-5,10-methylene-5,6,7,8-tetrahydrofolate binding site.

The protein belongs to the thymidylate synthase family. Bacterial-type ThyA subfamily. As to quaternary structure, homodimer.

It localises to the cytoplasm. It carries out the reaction dUMP + (6R)-5,10-methylene-5,6,7,8-tetrahydrofolate = 7,8-dihydrofolate + dTMP. It functions in the pathway pyrimidine metabolism; dTTP biosynthesis. Its function is as follows. Catalyzes the reductive methylation of 2'-deoxyuridine-5'-monophosphate (dUMP) to 2'-deoxythymidine-5'-monophosphate (dTMP) while utilizing 5,10-methylenetetrahydrofolate (mTHF) as the methyl donor and reductant in the reaction, yielding dihydrofolate (DHF) as a by-product. This enzymatic reaction provides an intracellular de novo source of dTMP, an essential precursor for DNA biosynthesis. The protein is Thymidylate synthase of Sphingopyxis alaskensis (strain DSM 13593 / LMG 18877 / RB2256) (Sphingomonas alaskensis).